Reading from the N-terminus, the 508-residue chain is Photosystem II CP47 reaction center protein (508 aa).

6 consecutive transmembrane segments (helical) span residues 21–36 (SVHLMHTALVSGWAGS), 101–115 (IILSGLLFLAAIWHW), 140–156 (GVHLFLSGALCLAFGVF), 203–218 (IAAGLLGLIAGGFHVL), 237–252 (VLSSSIAAVFWSAFVV), and 457–472 (SFALIFFFGHIWHGAR).

Belongs to the PsbB/PsbC family. PsbB subfamily. PSII is composed of 1 copy each of membrane proteins PsbA, PsbB, PsbC, PsbD, PsbE, PsbF, PsbH, PsbI, PsbJ, PsbK, PsbL, PsbM, PsbT, PsbY, PsbZ, Psb30/Ycf12, at least 3 peripheral proteins of the oxygen-evolving complex and a large number of cofactors. It forms dimeric complexes. It depends on Binds multiple chlorophylls. PSII binds additional chlorophylls, carotenoids and specific lipids. as a cofactor.

The protein resides in the plastid. Its subcellular location is the chloroplast thylakoid membrane. Functionally, one of the components of the core complex of photosystem II (PSII). It binds chlorophyll and helps catalyze the primary light-induced photochemical processes of PSII. PSII is a light-driven water:plastoquinone oxidoreductase, using light energy to abstract electrons from H(2)O, generating O(2) and a proton gradient subsequently used for ATP formation. The chain is Photosystem II CP47 reaction center protein from Euglena gracilis.